The chain runs to 301 residues: Transcription elongation factor A protein 1 (301 aa).

Residue Met-1 is modified to N-acetylmethionine. In terms of domain architecture, TFIIS N-terminal spans 3 to 80 (DEVIRIAKKM…KSWKKLLDGP (78 aa)). Lys-55 participates in a covalent cross-link: Glycyl lysine isopeptide (Lys-Gly) (interchain with G-Cter in ubiquitin). Residues Ser-57, Ser-81, Ser-97, and Ser-100 each carry the phosphoserine modification. Positions 76–93 (LLDGPSTDKDSEEKKKDT) are enriched in basic and acidic residues. A disordered region spans residues 76–139 (LLDGPSTDKD…FPRAPSTSDS (64 aa)). One can recognise a TFIIS central domain in the interval 140 to 256 (VRLKCREMLA…EHQMAKTGGT (117 aa)). A TFIIS-type zinc finger spans residues 259–299 (DLFTCGKCKKKNCTYTQVQTRSADEPMTTFVVCNECGNRWK). Residues Cys-263, Cys-266, Cys-291, and Cys-294 each coordinate Zn(2+).

It belongs to the TFS-II family. As to quaternary structure, interacts with EAF2. Associates with UBR5 and forms a transcription regulatory complex made of CDK9, Pol II, UBR5 and TCEA1/TFIIS. Part of TBP-based Pol II pre-initiation complex (PIC), in which Pol II core assembles with general transcription factors and other specific initiation factors including GTF2E1, GTF2E2, GTF2F1, GTF2F2, TCEA1, ERCC2, ERCC3, GTF2H2, GTF2H3, GTF2H4, GTF2H5, GTF2A1, GTF2A2, GTF2B and TBP; this large multi-subunit PIC complex mediates DNA unwinding and targets Pol II core to the transcription start site where the first phosphodiester bond forms.

The protein localises to the nucleus. Its function is as follows. Necessary for efficient RNA polymerase II transcription elongation past template-encoded arresting sites. The arresting sites in DNA have the property of trapping a certain fraction of elongating RNA polymerases that pass through, resulting in locked ternary complexes. Cleavage of the nascent transcript by S-II allows the resumption of elongation from the new 3'-terminus. The polypeptide is Transcription elongation factor A protein 1 (TCEA1) (Bos taurus (Bovine)).